We begin with the raw amino-acid sequence, 324 residues long: Methionyl-tRNA formyltransferase (324 aa).

A (6S)-5,6,7,8-tetrahydrofolate-binding site is contributed by 114-117 (SLLP).

This sequence belongs to the Fmt family.

It carries out the reaction L-methionyl-tRNA(fMet) + (6R)-10-formyltetrahydrofolate = N-formyl-L-methionyl-tRNA(fMet) + (6S)-5,6,7,8-tetrahydrofolate + H(+). Its function is as follows. Attaches a formyl group to the free amino group of methionyl-tRNA(fMet). The formyl group appears to play a dual role in the initiator identity of N-formylmethionyl-tRNA by promoting its recognition by IF2 and preventing the misappropriation of this tRNA by the elongation apparatus. In Parabacteroides distasonis (strain ATCC 8503 / DSM 20701 / CIP 104284 / JCM 5825 / NCTC 11152), this protein is Methionyl-tRNA formyltransferase.